The primary structure comprises 346 residues: MRVLEVNESKGEVKVRVEDEEDVWILHSALRPGDLVRARTARSVAGSSGKEKIPMTLTIKVTGSEFQAFSNVLRVKGVVVEGPDKFGLIGSHHAIKVYPGKEITIIRERGLAQLLERLKKGEERKPQVPVLAVDYDEYSLAVVRGQGIEWVFEGSLRLPGKGDEGREAATERKINELAKRVSEELKLRNLDHVVVVGPGFLKDKVAQRLSEEGFKVKVDSASSGGRAGVLEAIRKGSLRGVAKELESIKALEALEEFVKHVARGDGYALYGVDDCMTAAQANAVKTLIISDDLLHSPDLGERAVELVELAEKKGAEVIIVPKGTEAWERLRPFGDVVCLLRFPISL.

It belongs to the eukaryotic release factor 1 family. Pelota subfamily. In terms of assembly, monomer. It depends on a divalent metal cation as a cofactor.

The protein localises to the cytoplasm. Its function is as follows. May function in recognizing stalled ribosomes, interact with stem-loop structures in stalled mRNA molecules, and effect endonucleolytic cleavage of the mRNA. May play a role in the release non-functional ribosomes and degradation of damaged mRNAs. Has endoribonuclease activity. The chain is Protein pelota homolog from Ignicoccus hospitalis (strain KIN4/I / DSM 18386 / JCM 14125).